The chain runs to 208 residues: Protein GrpE (208 aa).

The segment at 1–62 (MTEKDESVKS…ETAVDPKDEE (62 aa)) is disordered. Residues 46–55 (SNEESSEETA) are compositionally biased toward acidic residues.

It belongs to the GrpE family. In terms of assembly, homodimer.

It is found in the cytoplasm. Its function is as follows. Participates actively in the response to hyperosmotic and heat shock by preventing the aggregation of stress-denatured proteins, in association with DnaK and GrpE. It is the nucleotide exchange factor for DnaK and may function as a thermosensor. Unfolded proteins bind initially to DnaJ; upon interaction with the DnaJ-bound protein, DnaK hydrolyzes its bound ATP, resulting in the formation of a stable complex. GrpE releases ADP from DnaK; ATP binding to DnaK triggers the release of the substrate protein, thus completing the reaction cycle. Several rounds of ATP-dependent interactions between DnaJ, DnaK and GrpE are required for fully efficient folding. The polypeptide is Protein GrpE (Staphylococcus haemolyticus (strain JCSC1435)).